Here is a 513-residue protein sequence, read N- to C-terminus: ATP synthase subunit alpha (513 aa).

169-176 is an ATP binding site; that stretch reads GDRQTGKT.

This sequence belongs to the ATPase alpha/beta chains family. As to quaternary structure, F-type ATPases have 2 components, CF(1) - the catalytic core - and CF(0) - the membrane proton channel. CF(1) has five subunits: alpha(3), beta(3), gamma(1), delta(1), epsilon(1). CF(0) has three main subunits: a(1), b(2) and c(9-12). The alpha and beta chains form an alternating ring which encloses part of the gamma chain. CF(1) is attached to CF(0) by a central stalk formed by the gamma and epsilon chains, while a peripheral stalk is formed by the delta and b chains.

The protein resides in the cell inner membrane. It catalyses the reaction ATP + H2O + 4 H(+)(in) = ADP + phosphate + 5 H(+)(out). Produces ATP from ADP in the presence of a proton gradient across the membrane. The alpha chain is a regulatory subunit. In Shewanella sp. (strain MR-4), this protein is ATP synthase subunit alpha.